Reading from the N-terminus, the 599-residue chain is Elongation factor 4 (599 aa).

The tr-type G domain maps to Lys-4 to Lys-185. GTP contacts are provided by residues Asp-16–Thr-21 and Asn-132–Asp-135.

Belongs to the TRAFAC class translation factor GTPase superfamily. Classic translation factor GTPase family. LepA subfamily.

It is found in the cell membrane. It carries out the reaction GTP + H2O = GDP + phosphate + H(+). Required for accurate and efficient protein synthesis under certain stress conditions. May act as a fidelity factor of the translation reaction, by catalyzing a one-codon backward translocation of tRNAs on improperly translocated ribosomes. Back-translocation proceeds from a post-translocation (POST) complex to a pre-translocation (PRE) complex, thus giving elongation factor G a second chance to translocate the tRNAs correctly. Binds to ribosomes in a GTP-dependent manner. The chain is Elongation factor 4 from Mycoplasmoides gallisepticum (strain R(low / passage 15 / clone 2)) (Mycoplasma gallisepticum).